A 325-amino-acid chain; its full sequence is Glycerol-3-phosphate dehydrogenase [NAD(P)+] (325 aa).

NADPH contacts are provided by S14, F15, R35, and K109. The sn-glycerol 3-phosphate site is built by K109 and G137. A141 is an NADPH binding site. The sn-glycerol 3-phosphate site is built by K192, D247, S257, R258, and N259. K192 functions as the Proton acceptor in the catalytic mechanism. R258 serves as a coordination point for NADPH. The NADPH site is built by L282 and E284.

The protein belongs to the NAD-dependent glycerol-3-phosphate dehydrogenase family.

Its subcellular location is the cytoplasm. The catalysed reaction is sn-glycerol 3-phosphate + NAD(+) = dihydroxyacetone phosphate + NADH + H(+). The enzyme catalyses sn-glycerol 3-phosphate + NADP(+) = dihydroxyacetone phosphate + NADPH + H(+). Its pathway is membrane lipid metabolism; glycerophospholipid metabolism. Catalyzes the reduction of the glycolytic intermediate dihydroxyacetone phosphate (DHAP) to sn-glycerol 3-phosphate (G3P), the key precursor for phospholipid synthesis. The sequence is that of Glycerol-3-phosphate dehydrogenase [NAD(P)+] from Rickettsia africae (strain ESF-5).